We begin with the raw amino-acid sequence, 138 residues long: Small ribosomal subunit protein uS11c (138 aa).

The tract at residues 1 to 24 (MTKPIPRIGSRKNGRISSRKNGRR) is disordered. Residues 9–24 (GSRKNGRISSRKNGRR) show a composition bias toward basic residues.

It belongs to the universal ribosomal protein uS11 family. Part of the 30S ribosomal subunit.

The protein resides in the plastid. Its subcellular location is the chloroplast. This chain is Small ribosomal subunit protein uS11c, found in Chloranthus spicatus (Chulantree).